The sequence spans 241 residues: Uridylate kinase (241 aa).

12–15 (KISG) contacts ATP. Positions 20-25 (GEKGTG) are involved in allosteric activation by GTP. UMP is bound at residue G54. G55 and R59 together coordinate ATP. UMP is bound by residues D74 and 135–142 (TGNPYFST). 3 residues coordinate ATP: N163, Y169, and D172.

The protein belongs to the UMP kinase family. As to quaternary structure, homohexamer.

The protein localises to the cytoplasm. It catalyses the reaction UMP + ATP = UDP + ADP. It participates in pyrimidine metabolism; CTP biosynthesis via de novo pathway; UDP from UMP (UMPK route): step 1/1. With respect to regulation, allosterically activated by GTP. Inhibited by UTP. Functionally, catalyzes the reversible phosphorylation of UMP to UDP. In Lactobacillus delbrueckii subsp. bulgaricus (strain ATCC 11842 / DSM 20081 / BCRC 10696 / JCM 1002 / NBRC 13953 / NCIMB 11778 / NCTC 12712 / WDCM 00102 / Lb 14), this protein is Uridylate kinase.